A 563-amino-acid chain; its full sequence is Arginine--tRNA ligase (563 aa).

The 'HIGH' region signature appears at Pro108 to His118.

Belongs to the class-I aminoacyl-tRNA synthetase family. In terms of assembly, monomer.

Its subcellular location is the cytoplasm. The catalysed reaction is tRNA(Arg) + L-arginine + ATP = L-arginyl-tRNA(Arg) + AMP + diphosphate. This chain is Arginine--tRNA ligase (argS), found in Pasteurella multocida (strain Pm70).